A 328-amino-acid chain; its full sequence is Hydrogenase-2 operon protein HybA (328 aa).

Residues 1–27 (MNRRNFIKAASCGALLTGALPSVSHAA) form the signal peptide. 4Fe-4S ferredoxin-type domains are found at residues 38 to 68 (LGML…RNPQ), 103 to 134 (NGYA…KDPK), and 136 to 165 (GIVH…YDYN). 16 residues coordinate [4Fe-4S] cluster: Cys47, Cys50, Cys53, Cys57, Cys112, Cys115, Cys120, Cys124, Cys145, Cys148, Cys151, Cys155, Cys174, Cys177, Cys193, and Cys197.

Requires [4Fe-4S] cluster as cofactor.

The protein localises to the periplasm. In terms of biological role, participates in the periplasmic electron-transferring activity of hydrogenase 2 during its catalytic turnover. The protein is Hydrogenase-2 operon protein HybA (hybA) of Escherichia coli O157:H7.